The primary structure comprises 523 residues: Leucine-rich repeat-containing protein 27 (523 aa).

Residues 1–26 (MEDTSPQAVAEKAAKDPKAAKDLKDD) form a disordered region. Residues 12–26 (KAAKDPKAAKDLKDD) show a composition bias toward basic and acidic residues. LRR repeat units follow at residues 55–76 (SSPVLDLSQRGLRHLGKFFKIP), 77–98 (NLQQLHLQRNLLREIPEDFFQL), 101–122 (NLTWLDLRYNKIKVLPSGIGSH), 124–145 (HLKTLLLERNPIKMLPVELGQV), and 147–168 (TLTALNLRHCPLEFPPRLIVQK). Disordered stretches follow at residues 206-236 (QYPVLPLPRKGSPSENSLNDPDQEKEKADFF) and 372-394 (REQTQHMRTRRELSKLQPPHSNM). Composition is skewed to basic and acidic residues over residues 227–236 (DQEKEKADFF) and 372–385 (REQTQHMRTRRELS). Coiled coils occupy residues 335–374 (VHANRMEDTHKAALQELQEKETVLEQRRRDKRALQEWREQ) and 463–494 (MQDIKTANQDLETTKKLQEELRKLKVEMTLNK). The tract at residues 503 to 523 (GNLSLHPPASQPQNIFFNTKS) is disordered. Positions 513 to 523 (QPQNIFFNTKS) are enriched in polar residues.

The sequence is that of Leucine-rich repeat-containing protein 27 (Lrrc27) from Mus musculus (Mouse).